Reading from the N-terminus, the 106-residue chain is MMATGTPESQARFGQSVKGLLTEKVTTCGTDVIALTKQVLKGSRSSELLGQAARNMVLQEDAILHSEDSLRKMAIITTHLQYQQEAIQKNVEQSSDLQDQLNHLLK.

The protein belongs to the BORCS7 family. Component of the BLOC-one-related complex (BORC) which is composed of BLOC1S1, BLOC1S2, BORCS5, BORCS6, BORCS7, BORCS8, KXD1 and SNAPIN.

Its subcellular location is the lysosome membrane. Functionally, as part of the BORC complex may play a role in lysosomes movement and localization at the cell periphery. Associated with the cytosolic face of lysosomes, the BORC complex may recruit ARL8B and couple lysosomes to microtubule plus-end-directed kinesin motor. The protein is BLOC-1-related complex subunit 7 of Homo sapiens (Human).